A 399-amino-acid polypeptide reads, in one-letter code: MDTHAFKRSLHHSERYNRRGFGRAEEVAESLEQAYQSGLIGTIRDNGYRLEHGRLNVRLAEAFGFCWGVERAVAMAYETRKHYPSERLWITNEIIHNPSVNDHLREMDVQFIPVEQGVKDFSGVTSGDVVILPAFGATVQEMQLLNERGCHIVDTTCPWVSKVWNTVEKHKKHTFTSIIHGKVKHEETLATSSFAGTYLVVLDLEEAQYVADYILGNGDREDFIKRFAKACSPGFDPDRDLERLGVANQTTMLKSETEEIGRLFERTMLSKYGPTQLNDHFLAFNTICDATQERQDAMFSLVDEPLDLMVVIGGFNSSNTTHLQEIAVSRGIRSFHIDTPERIDVGSNSIEHKPLAADLCREGDFLPEGPVRVGITSGASTPDRAVEEVIEKLMQLSEN.

Residue cysteine 66 participates in [4Fe-4S] cluster binding. Position 96 (histidine 96) interacts with (2E)-4-hydroxy-3-methylbut-2-enyl diphosphate. A dimethylallyl diphosphate-binding site is contributed by histidine 96. Histidine 96 lines the isopentenyl diphosphate pocket. Residue cysteine 157 participates in [4Fe-4S] cluster binding. Histidine 185 is a binding site for (2E)-4-hydroxy-3-methylbut-2-enyl diphosphate. Histidine 185 serves as a coordination point for dimethylallyl diphosphate. Histidine 185 serves as a coordination point for isopentenyl diphosphate. Glutamate 187 serves as the catalytic Proton donor. Threonine 250 lines the (2E)-4-hydroxy-3-methylbut-2-enyl diphosphate pocket. A [4Fe-4S] cluster-binding site is contributed by cysteine 288. Residues serine 317, serine 318, asparagine 319, and serine 380 each contribute to the (2E)-4-hydroxy-3-methylbut-2-enyl diphosphate site. The dimethylallyl diphosphate site is built by serine 317, serine 318, asparagine 319, and serine 380. Isopentenyl diphosphate is bound by residues serine 317, serine 318, asparagine 319, and serine 380.

The protein belongs to the IspH family. It depends on [4Fe-4S] cluster as a cofactor.

The enzyme catalyses isopentenyl diphosphate + 2 oxidized [2Fe-2S]-[ferredoxin] + H2O = (2E)-4-hydroxy-3-methylbut-2-enyl diphosphate + 2 reduced [2Fe-2S]-[ferredoxin] + 2 H(+). It catalyses the reaction dimethylallyl diphosphate + 2 oxidized [2Fe-2S]-[ferredoxin] + H2O = (2E)-4-hydroxy-3-methylbut-2-enyl diphosphate + 2 reduced [2Fe-2S]-[ferredoxin] + 2 H(+). It participates in isoprenoid biosynthesis; dimethylallyl diphosphate biosynthesis; dimethylallyl diphosphate from (2E)-4-hydroxy-3-methylbutenyl diphosphate: step 1/1. It functions in the pathway isoprenoid biosynthesis; isopentenyl diphosphate biosynthesis via DXP pathway; isopentenyl diphosphate from 1-deoxy-D-xylulose 5-phosphate: step 6/6. Its function is as follows. Catalyzes the conversion of 1-hydroxy-2-methyl-2-(E)-butenyl 4-diphosphate (HMBPP) into a mixture of isopentenyl diphosphate (IPP) and dimethylallyl diphosphate (DMAPP). Acts in the terminal step of the DOXP/MEP pathway for isoprenoid precursor biosynthesis. The protein is 4-hydroxy-3-methylbut-2-enyl diphosphate reductase of Synechococcus sp. (strain CC9605).